A 372-amino-acid polypeptide reads, in one-letter code: Glutamate 5-kinase (372 aa).

ATP is bound at residue lysine 14. Substrate contacts are provided by serine 54, aspartate 141, and asparagine 153. 173 to 174 (TD) lines the ATP pocket. One can recognise a PUA domain in the interval 280 to 358 (RGHVVIDAGA…GEIESVLGYM (79 aa)).

The protein belongs to the glutamate 5-kinase family.

It localises to the cytoplasm. The enzyme catalyses L-glutamate + ATP = L-glutamyl 5-phosphate + ADP. The protein operates within amino-acid biosynthesis; L-proline biosynthesis; L-glutamate 5-semialdehyde from L-glutamate: step 1/2. Its function is as follows. Catalyzes the transfer of a phosphate group to glutamate to form L-glutamate 5-phosphate. The chain is Glutamate 5-kinase from Burkholderia multivorans (strain ATCC 17616 / 249).